A 501-amino-acid chain; its full sequence is Probable cytochrome P450 28d2 (501 aa).

C446 is a binding site for heme.

The protein belongs to the cytochrome P450 family. The cofactor is heme.

It is found in the endoplasmic reticulum membrane. It localises to the microsome membrane. Functionally, may be involved in the metabolism of insect hormones and in the breakdown of synthetic insecticides. This chain is Probable cytochrome P450 28d2 (Cyp28d2), found in Drosophila melanogaster (Fruit fly).